The sequence spans 396 residues: Chalcone synthase (396 aa).

Cys167 is an active-site residue.

The protein belongs to the thiolase-like superfamily. Chalcone/stilbene synthases family.

The catalysed reaction is (E)-4-coumaroyl-CoA + 3 malonyl-CoA + 3 H(+) = 2',4,4',6'-tetrahydroxychalcone + 3 CO2 + 4 CoA. The protein operates within secondary metabolite biosynthesis; flavonoid biosynthesis. In terms of biological role, the primary product of this enzyme is 4,2',4',6'-tetrahydroxychalcone (also termed naringenin-chalcone or chalcone) which can under specific conditions spontaneously isomerize into naringenin. This is Chalcone synthase (CHS) from Chrysosplenium americanum (American golden saxifrage).